Consider the following 618-residue polypeptide: Glycine--tRNA ligase 2 (618 aa).

A glycine-binding site is contributed by Glu187. ATP-binding positions include 219–221 (RNE) and 230–231 (RV). Glu238 contacts glycine. 347–348 (EC) is an ATP binding site. 466–468 (EPS) lines the glycine pocket. Arg473 contacts ATP.

This sequence belongs to the class-II aminoacyl-tRNA synthetase family. As to quaternary structure, homodimer.

It localises to the cytoplasm. The catalysed reaction is tRNA(Gly) + glycine + ATP = glycyl-tRNA(Gly) + AMP + diphosphate. The enzyme catalyses 2 ATP + H(+) = P(1),P(4)-bis(5'-adenosyl) tetraphosphate + diphosphate. Functionally, catalyzes the ATP-dependent ligation of glycine to the 3'-end of its cognate tRNA, via the formation of an aminoacyl-adenylate intermediate (Gly-AMP). Also produces diadenosine tetraphosphate (Ap4A), a universal pleiotropic signaling molecule needed for cell regulation pathways, by direct condensation of 2 ATPs. Thereby, may play a special role in Ap4A homeostasis. The polypeptide is Glycine--tRNA ligase 2 (GRS2) (Saccharomyces cerevisiae (strain ATCC 204508 / S288c) (Baker's yeast)).